The sequence spans 285 residues: 1,4-dihydroxy-2-naphthoyl-CoA synthase (285 aa).

Residues Arg-45, 84–89 (SGGDQK), Tyr-97, 129–133 (YSIGG), Thr-155, Ser-161, Tyr-258, and Lys-273 each bind substrate. 154 to 156 (QTG) contributes to the hydrogencarbonate binding site.

The protein belongs to the enoyl-CoA hydratase/isomerase family. MenB subfamily. Homohexamer. Dimer of a homotrimer. The cofactor is hydrogencarbonate.

It carries out the reaction 2-succinylbenzoyl-CoA + H(+) = 1,4-dihydroxy-2-naphthoyl-CoA + H2O. Its pathway is quinol/quinone metabolism; 1,4-dihydroxy-2-naphthoate biosynthesis; 1,4-dihydroxy-2-naphthoate from chorismate: step 6/7. It participates in quinol/quinone metabolism; menaquinone biosynthesis. With respect to regulation, inhibited by sulfite and nitrate. Its function is as follows. Converts o-succinylbenzoyl-CoA (OSB-CoA) to 1,4-dihydroxy-2-naphthoyl-CoA (DHNA-CoA). This is 1,4-dihydroxy-2-naphthoyl-CoA synthase from Escherichia coli (strain K12).